Consider the following 161-residue polypeptide: uncharacterized protein (161 aa).

This sequence belongs to the sapovirus VP3 family.

This is an uncharacterized protein from Sapporo virus (strain Human/United Kingdom/Manchester/1993) (Hu/SV/Man/1993/UK).